We begin with the raw amino-acid sequence, 248 residues long: Ribosomal RNA small subunit methyltransferase G (248 aa).

A disordered region spans residues 1–23 (MFHVKHVGPVEPAAGDPEVPPVA). Residues Gly-93, Leu-98, 143–144 (AE), and Arg-161 each bind S-adenosyl-L-methionine. Positions 226 to 248 (VVSARRAKPPHPKSARTGKAGTR) are disordered. Residues 230-248 (RRAKPPHPKSARTGKAGTR) show a composition bias toward basic residues.

This sequence belongs to the methyltransferase superfamily. RNA methyltransferase RsmG family.

It is found in the cytoplasm. Its function is as follows. Specifically methylates the N7 position of guanine in position 518 of 16S rRNA. The protein is Ribosomal RNA small subunit methyltransferase G of Mycolicibacterium paratuberculosis (strain ATCC BAA-968 / K-10) (Mycobacterium paratuberculosis).